The primary structure comprises 165 residues: Putative TRAP transporter small permease protein HI_0051 (165 aa).

The next 4 helical transmembrane spans lie at 20 to 40, 51 to 71, 94 to 114, and 136 to 156; these read LEYL…FNSV, FSEE…IILV, IVLI…AYGA, and LYLA…FSMI.

The protein belongs to the TRAP transporter small permease family.

It is found in the cell inner membrane. In Haemophilus influenzae (strain ATCC 51907 / DSM 11121 / KW20 / Rd), this protein is Putative TRAP transporter small permease protein HI_0051.